We begin with the raw amino-acid sequence, 524 residues long: RNA-binding protein 39 (524 aa).

The tract at residues 1–146 is disordered; that stretch reads MADDIDIEAM…PVREPIDNLT (146 aa). Ala2 carries the post-translational modification N-acetylalanine. The segment covering 14 to 32 has biased composition (basic and acidic residues); the sequence is PYKKDENKLSSANGHEERS. Basic residues-rich tracts occupy residues 33 to 56 and 64 to 95; these read KKRKKSKSRSRSHERKRSKSKERK and KKSKSRERKRSRSKERRRSRSRSRDRRFRGRY. Position 95 is a phosphotyrosine (Tyr95). A phosphoserine mark is found at Ser97 and Ser100. A Glycyl lysine isopeptide (Lys-Gly) (interchain with G-Cter in SUMO2) cross-link involves residue Lys111. Ser117 carries the phosphoserine modification. Residue Lys119 forms a Glycyl lysine isopeptide (Lys-Gly) (interchain with G-Cter in SUMO2) linkage. Over residues 119 to 130 the composition is skewed to basic residues; the sequence is KLSRRRSRSKSP. Phosphoserine is present on residues Ser121 and Ser136. A compositionally biased stretch (basic and acidic residues) spans 131-146; it reads FRKDKSPVREPIDNLT. Position 146 is a phosphothreonine (Thr146). Positions 153–230 constitute an RRM 1 domain; sequence RTVFCMQLAA…VPIIVQASQA (78 aa). Residue Lys244 forms a Glycyl lysine isopeptide (Lys-Gly) (interchain with G-Cter in SUMO2) linkage. Residues 250 to 328 enclose the RRM 2 domain; it reads MRLYVGSLHF…RPMKVGHVTE (79 aa). The activating domain stretch occupies residues 291–355; sequence KGYGFITFSD…RTGIDLGTTG (65 aa). The interval 291–400 is interaction with JUN; sequence KGYGFITFSD…ADLQTRLSQQ (110 aa). Residues Ser334, Ser337, and Ser341 each carry the phosphoserine modification. Positions 355-400 are interaction with ESR1 and ESR2; that stretch reads GRLQLMARLAEGTGLQIPPAAQQALQMSGSLAFGAVADLQTRLSQQ. An interaction with NCOA6 region spans residues 400–524; sequence QTEASALAAA…ATQLLVPSRR (125 aa). The RRM 3 domain occupies 439-502; sequence EIKDDVIEEC…KMITAAYVPL (64 aa).

The protein belongs to the splicing factor SR family. In terms of assembly, interacts with NCOA6 and JUN. Interacts with ESR1 and ESR2, in the presence of estradiol (E2). Interacts with RSRC1 (via Arg/Ser-rich domain). Interacts with SF3B1. Interacts with ZNF106 (via N-terminus).

It localises to the nucleus speckle. Its function is as follows. RNA-binding protein that acts as a pre-mRNA splicing factor. Acts by promoting exon inclusion via regulation of exon cassette splicing. Also acts as a transcriptional coactivator for steroid nuclear receptors ESR1/ER-alpha and ESR2/ER-beta, and JUN/AP-1, independently of the pre-mRNA splicing factor activity. In Pongo abelii (Sumatran orangutan), this protein is RNA-binding protein 39 (RBM39).